The chain runs to 398 residues: Cysteine protease ATG4A (398 aa).

Cysteine 77 functions as the Nucleophile in the catalytic mechanism. Catalysis depends on residues aspartate 279 and histidine 281. Positions 393–396 (FEIL) match the LIR motif.

Belongs to the peptidase C54 family. As to quaternary structure, interacts with ATG9A; the interaction is direct.

The protein localises to the cytoplasm. It catalyses the reaction [protein]-C-terminal L-amino acid-glycyl-phosphatidylethanolamide + H2O = [protein]-C-terminal L-amino acid-glycine + a 1,2-diacyl-sn-glycero-3-phosphoethanolamine. Inhibited by N-ethylmaleimide. Redox-regulated during autophagy since reducing conditions activate ATG4A whereas an oxidizing environment such as the presence of H(2)O(2) inhibits its activity. In terms of biological role, cysteine protease that plays a key role in autophagy by mediating both proteolytic activation and delipidation of ATG8 family proteins. The protease activity is required for proteolytic activation of ATG8 family proteins: cleaves the C-terminal amino acid of ATG8 proteins to reveal a C-terminal glycine. Exposure of the glycine at the C-terminus is essential for ATG8 proteins conjugation to phosphatidylethanolamine (PE) and insertion to membranes, which is necessary for autophagy. Preferred substrate is GABARAPL2 followed by MAP1LC3A and GABARAP. Protease activity is also required to counteract formation of high-molecular weight conjugates of ATG8 proteins (ATG8ylation): acts as a deubiquitinating-like enzyme that removes ATG8 conjugated to other proteins, such as ATG3. In addition to the protease activity, also mediates delipidation of ATG8 family proteins. Catalyzes delipidation of PE-conjugated forms of ATG8 proteins during macroautophagy. Compared to ATG4B, the major protein for proteolytic activation of ATG8 proteins, shows weaker ability to cleave the C-terminal amino acid of ATG8 proteins, while it displays stronger delipidation activity. Involved in phagophore growth during mitophagy independently of its protease activity and of ATG8 proteins: acts by regulating ATG9A trafficking to mitochondria and promoting phagophore-endoplasmic reticulum contacts during the lipid transfer phase of mitophagy. This chain is Cysteine protease ATG4A, found in Pongo abelii (Sumatran orangutan).